The chain runs to 562 residues: Putative transport protein NT01EI_2530 (562 aa).

6 helical membrane passes run 8 to 28 (LLTG…LCLG), 32 to 52 (LGSI…LLGQ), 66 to 86 (FMLF…SIFF), 94 to 114 (MLAL…GKLF), 118 to 138 (IGLT…LVGA), and 158 to 178 (HLSL…IFGA). RCK C-terminal domains are found at residues 202–288 (LDND…SFRN) and 290–373 (KEVF…RIGF). 5 helical membrane passes run 383–403 (LLAF…TFQF), 406–426 (FSFG…LGFL), 443–463 (MVKE…AGAG), 477–497 (IAGL…GAFV), and 541–561 (IANV…PGVV).

This sequence belongs to the AAE transporter (TC 2.A.81) family. YbjL subfamily.

It is found in the cell membrane. This Edwardsiella ictaluri (strain 93-146) protein is Putative transport protein NT01EI_2530.